The chain runs to 440 residues: MGREPFNLKNLEMRIINNKKDAIQELKRISSRTNSENNNKINLIVEEILQEVKTYGDIAVEKYTKKFDGFNPDPMQISEDHLKDAWDEIDSNLKRSLEVAHKRIKKFHEKEIPQSFTIKGEHGDTVQRRWRPVKNAGIYIPGGRAAYPSTVLMNAIPAKVAGVEEIIMVSPGNKEGEINKTVLAAAHLSGIKKVFRIGGAQAIGALAFGTNQINKVDVITGPGNIYVTTAKKLIYGSTGIDSLAGPSEILVIADETAQSTHIASDLLAQAEHDPLASSILLTTSKNQAKEVLEELYKKIDDHPRKEICMQSIKNWGLIVICENYELCIELSNNFAPEHLEILALDSKKILEGIENAGAIFLGKWTPEAVGDYLAGPNHTLPTSGNSRFSGSLGVETFMKNTSIIEFNEESLKVNSLDIINLAESEGLHSHANSVKIRFED.

NAD(+) is bound by residues Y139, Q201, and N224. Substrate contacts are provided by S247, Q269, and H272. The Zn(2+) site is built by Q269 and H272. Residues E337 and H338 each act as proton acceptor in the active site. Residues H338, D371, E425, and H430 each coordinate substrate. D371 contacts Zn(2+). H430 contacts Zn(2+).

Belongs to the histidinol dehydrogenase family. Zn(2+) serves as cofactor.

The catalysed reaction is L-histidinol + 2 NAD(+) + H2O = L-histidine + 2 NADH + 3 H(+). It functions in the pathway amino-acid biosynthesis; L-histidine biosynthesis; L-histidine from 5-phospho-alpha-D-ribose 1-diphosphate: step 9/9. Functionally, catalyzes the sequential NAD-dependent oxidations of L-histidinol to L-histidinaldehyde and then to L-histidine. The protein is Histidinol dehydrogenase of Prochlorococcus marinus (strain MIT 9312).